We begin with the raw amino-acid sequence, 190 residues long: UPF0301 protein Reut_A0705 (190 aa).

It belongs to the UPF0301 (AlgH) family.

In Cupriavidus pinatubonensis (strain JMP 134 / LMG 1197) (Cupriavidus necator (strain JMP 134)), this protein is UPF0301 protein Reut_A0705.